The primary structure comprises 183 residues: NAD(P)H-quinone oxidoreductase subunit I, chloroplastic (183 aa).

2 4Fe-4S ferredoxin-type domains span residues 55-84 (GRIH…VDWE) and 95-124 (TSYS…MTEE). The [4Fe-4S] cluster site is built by Cys-64, Cys-67, Cys-70, Cys-74, Cys-104, Cys-107, Cys-110, and Cys-114.

Belongs to the complex I 23 kDa subunit family. As to quaternary structure, NDH is composed of at least 16 different subunits, 5 of which are encoded in the nucleus. The cofactor is [4Fe-4S] cluster.

It is found in the plastid. The protein resides in the chloroplast thylakoid membrane. It carries out the reaction a plastoquinone + NADH + (n+1) H(+)(in) = a plastoquinol + NAD(+) + n H(+)(out). The enzyme catalyses a plastoquinone + NADPH + (n+1) H(+)(in) = a plastoquinol + NADP(+) + n H(+)(out). In terms of biological role, NDH shuttles electrons from NAD(P)H:plastoquinone, via FMN and iron-sulfur (Fe-S) centers, to quinones in the photosynthetic chain and possibly in a chloroplast respiratory chain. The immediate electron acceptor for the enzyme in this species is believed to be plastoquinone. Couples the redox reaction to proton translocation, and thus conserves the redox energy in a proton gradient. The sequence is that of NAD(P)H-quinone oxidoreductase subunit I, chloroplastic from Huperzia lucidula (Shining clubmoss).